A 119-amino-acid polypeptide reads, in one-letter code: Ribonuclease P protein component (119 aa).

This sequence belongs to the RnpA family. In terms of assembly, consists of a catalytic RNA component (M1 or rnpB) and a protein subunit.

The enzyme catalyses Endonucleolytic cleavage of RNA, removing 5'-extranucleotides from tRNA precursor.. RNaseP catalyzes the removal of the 5'-leader sequence from pre-tRNA to produce the mature 5'-terminus. It can also cleave other RNA substrates such as 4.5S RNA. The protein component plays an auxiliary but essential role in vivo by binding to the 5'-leader sequence and broadening the substrate specificity of the ribozyme. This is Ribonuclease P protein component from Escherichia fergusonii (strain ATCC 35469 / DSM 13698 / CCUG 18766 / IAM 14443 / JCM 21226 / LMG 7866 / NBRC 102419 / NCTC 12128 / CDC 0568-73).